The sequence spans 283 residues: Ribosomal RNA small subunit methyltransferase I (283 aa).

The protein belongs to the methyltransferase superfamily. RsmI family.

The protein resides in the cytoplasm. The catalysed reaction is cytidine(1402) in 16S rRNA + S-adenosyl-L-methionine = 2'-O-methylcytidine(1402) in 16S rRNA + S-adenosyl-L-homocysteine + H(+). Functionally, catalyzes the 2'-O-methylation of the ribose of cytidine 1402 (C1402) in 16S rRNA. The protein is Ribosomal RNA small subunit methyltransferase I of Haemophilus influenzae (strain ATCC 51907 / DSM 11121 / KW20 / Rd).